The following is a 204-amino-acid chain: Arginine exporter protein ArgO (204 aa).

A run of 6 helical transmembrane segments spans residues 1 to 21, 37 to 57, 67 to 87, 111 to 131, 147 to 167, and 179 to 199; these read MFAVFLQGALLGAAMILPLGP, LMVALLCALSDMVLITAGIFG, LLLGAVTWGGVAFLLWFGWGA, IIATMLAVTWLNPHVYLDTFV, WFALGTMTASFTWFFALALLA, and VQRVINFFVGVVMWGIALQLA.

This sequence belongs to the LysE/ArgO transporter (TC 2.A.75) family.

It is found in the cell inner membrane. The enzyme catalyses L-arginine(in) = L-arginine(out). Functionally, involved in the export of arginine. Important to control the intracellular level of arginine and the correct balance between arginine and lysine. This chain is Arginine exporter protein ArgO, found in Pectobacterium carotovorum subsp. carotovorum (strain PC1).